The sequence spans 468 residues: MDPLGDTLRRLREAFHAGRTRPAEFRAAQLQGLGRFLQENKQLLHDALAQDLHKSAFESEVSEVAISQGEVTLALRNLRAWMKDERVPKNLATQLDSAFIRKEPFGLVLIIAPWNYPLNLTLVPLVGALAAGNCVVLKPSEISKNVEKILAEVLPQYVDQSCFAVVLGGPQETGQLLEHRFDYIFFTGSPRVGKIVMTAAAKHLTPVTLELGGKNPCYVDDNCDPQTVANRVAWFRYFNAGQTCVAPDYVLCSPEMQERLLPALQSTITRFYGDDPQSSPNLGRIINQKQFQRLRALLGCGRVAIGGQSDESDRYIAPTVLVDVQEMEPVMQEEIFGPILPIVNVQSLDEAIEFINRREKPLALYAFSNSSQVVKRVLTQTSSGGFCGNDGFMHMTLASLPFGGVGASGMGRYHGKFSFDTFSHHRACLLRSPGMEKLNALRYPPQSPRRLRMLLVAMEAQGCSCTLL.

Met1 bears the N-acetylmethionine mark. 188 to 193 (GSPRVG) serves as a coordination point for NAD(+). Catalysis depends on residues Glu210 and Cys244. The S-palmitoyl cysteine moiety is linked to residue Cys463. At Cys465 the chain carries Cysteine methyl ester. Cys465 carries the S-geranylgeranyl cysteine lipid modification. Residues 466-468 (TLL) constitute a propeptide, removed in mature form.

It belongs to the aldehyde dehydrogenase family. In terms of processing, dually lipidated in the C-terminus; prenylation occurs prior to, and is a prerequisite for palmitoylation. It is also required for activity towards long-chain substrates. Highest expression in kidney and lung.

The protein localises to the cell membrane. The enzyme catalyses an aldehyde + NADP(+) + H2O = a carboxylate + NADPH + 2 H(+). The catalysed reaction is an aldehyde + NAD(+) + H2O = a carboxylate + NADH + 2 H(+). It catalyses the reaction a long-chain fatty aldehyde + NAD(+) + H2O = a long-chain fatty acid + NADH + 2 H(+). It carries out the reaction a medium-chain fatty aldehyde + NAD(+) + H2O = a medium-chain fatty acid + NADH + 2 H(+). The enzyme catalyses octanal + NAD(+) + H2O = octanoate + NADH + 2 H(+). The catalysed reaction is nonanal + NAD(+) + H2O = nonanoate + NADH + 2 H(+). It catalyses the reaction hexadecanoate + NADH + 2 H(+) = hexadecanal + NAD(+) + H2O. It carries out the reaction (2E)-octenal + NAD(+) + H2O = (2E)-octenoate + NADH + 2 H(+). The enzyme catalyses (E)-non-2-enal + NAD(+) + H2O = (E)-non-2-enoate + NADH + 2 H(+). The catalysed reaction is (E)-4-hydroxynon-2-enal + NAD(+) + H2O = (E)-4-hydroxynon-2-enoate + NADH + 2 H(+). It catalyses the reaction (2E)-hexadecenal + NAD(+) + H2O = (E)-hexadec-2-enoate + NADH + 2 H(+). It carries out the reaction benzaldehyde + NAD(+) + H2O = benzoate + NADH + 2 H(+). The enzyme catalyses a medium-chain fatty aldehyde + NADP(+) + H2O = a medium-chain fatty acid + NADPH + 2 H(+). The catalysed reaction is hexanal + NADP(+) + H2O = hexanoate + NADPH + 2 H(+). It catalyses the reaction octanal + NADP(+) + H2O = octanoate + NADPH + 2 H(+). It carries out the reaction nonanal + NADP(+) + H2O = nonanoate + NADPH + 2 H(+). The enzyme catalyses (2E)-octenal + NADP(+) + H2O = (2E)-octenoate + NADPH + 2 H(+). The catalysed reaction is (E)-non-2-enal + NADP(+) + H2O = (E)-non-2-enoate + NADPH + 2 H(+). It catalyses the reaction (E)-4-hydroxynon-2-enal + NADP(+) + H2O = (E)-4-hydroxynon-2-enoate + NADPH + 2 H(+). It carries out the reaction benzaldehyde + NADP(+) + H2O = benzoate + NADPH + 2 H(+). It functions in the pathway alcohol metabolism; ethanol degradation; acetate from ethanol: step 2/2. Oxidizes medium and long chain saturated and unsaturated fatty aldehydes generated in the plasma membrane into non-toxic fatty acids. May have a protective role against the cytotoxicity induced by lipid peroxidation. Short-chain fatty aldehydes are not good substrates. Can use both NADP(+) and NAD(+) as electron acceptor in vitro, however in vivo preference will depend on their tissue levels. Low activity towards acetaldehyde and 3,4-dihydroxyphenylacetaldehyde. Able to metabolize aromatic aldehydes such as benzaldehyde to their acid form. This Homo sapiens (Human) protein is Aldehyde dehydrogenase family 3 member B1 (ALDH3B1).